The following is a 666-amino-acid chain: Long-chain-fatty-acid--CoA ligase ACSBG2 (666 aa).

ATP is bound by residues 230–238, 418–423, Asp-496, and Arg-624; these read TSGTTGIPK and ELYGLS.

Belongs to the ATP-dependent AMP-binding enzyme family. Bubblegum subfamily. Testis-specific.

It localises to the cytoplasm. Its subcellular location is the membrane. The catalysed reaction is a long-chain fatty acid + ATP + CoA = a long-chain fatty acyl-CoA + AMP + diphosphate. It catalyses the reaction (5Z,8Z,11Z,14Z)-eicosatetraenoate + ATP + CoA = (5Z,8Z,11Z,14Z)-eicosatetraenoyl-CoA + AMP + diphosphate. It carries out the reaction hexadecanoate + ATP + CoA = hexadecanoyl-CoA + AMP + diphosphate. The enzyme catalyses (9Z)-octadecenoate + ATP + CoA = (9Z)-octadecenoyl-CoA + AMP + diphosphate. The catalysed reaction is (9Z,12Z)-octadecadienoate + ATP + CoA = (9Z,12Z)-octadecadienoyl-CoA + AMP + diphosphate. It catalyses the reaction tetracosanoate + ATP + CoA = tetracosanoyl-CoA + AMP + diphosphate. Functionally, catalyzes the conversion of fatty acids such as long chain and very long-chain fatty acids to their active form acyl-CoAs for both synthesis of cellular lipids, and degradation via beta-oxidation. Can activate diverse saturated, monosaturated and polyunsaturated fatty acids. Has increased ability to activate oleic and linoleic acid. May play a role in spermatogenesis. The sequence is that of Long-chain-fatty-acid--CoA ligase ACSBG2 from Homo sapiens (Human).